The following is an 81-amino-acid chain: Gamma-conotoxin-like TxMEKL-0511 (81 aa).

The N-terminal stretch at 1 to 19 is a signal peptide; it reads MEKLTILLLVAAVLLSIQA. Residues 20 to 45 constitute a propeptide that is removed on maturation; that stretch reads LNQEKHQRAKINLLSKRKPPAERWWR. Cystine bridges form between Cys49–Cys63, Cys56–Cys67, and Cys62–Cys72.

This sequence belongs to the conotoxin O2 superfamily. As to expression, expressed by the venom duct.

Its subcellular location is the secreted. Functionally, gamma-conotoxins may act on voltage-gated non-specific cation pacemaker channels (HCN). The chain is Gamma-conotoxin-like TxMEKL-0511 from Conus textile (Cloth-of-gold cone).